The sequence spans 181 residues: Inner membrane-spanning protein YciB (181 aa).

The next 5 helical transmembrane spans lie at 10 to 30 (LIIFFAVYKFFDIYIASGALI), 50 to 70 (MHLITFAMVTVFGTLTLVFHD), 72 to 92 (AFIKWKVTIIYALFALALGVS), 118 to 138 (VTWYWVSFFAICGLVNIYVAF), and 148 to 168 (FKVFGLTALTLINTVITVFYL).

This sequence belongs to the YciB family.

It is found in the cell inner membrane. In terms of biological role, plays a role in cell envelope biogenesis, maintenance of cell envelope integrity and membrane homeostasis. The chain is Inner membrane-spanning protein YciB from Shewanella sp. (strain ANA-3).